A 514-amino-acid chain; its full sequence is Transcription termination factor Rho (514 aa).

The segment at 25–52 (EPSSTPGPARNARRSNRRMRHPDKDVDK) is disordered. The segment covering 35 to 45 (NARRSNRRMRH) has biased composition (basic residues). One can recognise a Rho RNA-BD domain in the interval 141–216 (LMYGEGTLEI…LRIEAINHAD (76 aa)). Residues 259–264 (GFGQRG), 271–276 (RAGKTM), and Arg302 each bind ATP.

The protein belongs to the Rho family. In terms of assembly, homohexamer. The homohexamer assembles into an open ring structure.

Functionally, facilitates transcription termination by a mechanism that involves Rho binding to the nascent RNA, activation of Rho's RNA-dependent ATPase activity, and release of the mRNA from the DNA template. The chain is Transcription termination factor Rho from Rhodopirellula baltica (strain DSM 10527 / NCIMB 13988 / SH1).